The primary structure comprises 436 residues: O-phosphoseryl-tRNA(Sec) selenium transferase (436 aa).

The tetramerization stretch occupies residues 1–44 (MLDFNIEGLIPKNMEKRGELVLNEYLKEIEDVFNHRKIPENGID). Arginine 72 is a pyridoxal 5'-phosphate binding site. The interval 93–103 (GRSGNLVDPQP) is phosphate loop (P-loop). Substrate contacts are provided by arginine 94, serine 95, and glutamine 102. Lysine 278 carries the N6-(pyridoxal phosphate)lysine modification. Arginine 307 contributes to the substrate binding site.

This sequence belongs to the SepSecS family. As to quaternary structure, homotetramer. The cofactor is pyridoxal 5'-phosphate.

The catalysed reaction is O-phospho-L-seryl-tRNA(Sec) + selenophosphate + H2O = L-selenocysteinyl-tRNA(Sec) + 2 phosphate. It functions in the pathway aminoacyl-tRNA biosynthesis; selenocysteinyl-tRNA(Sec) biosynthesis; selenocysteinyl-tRNA(Sec) from L-seryl-tRNA(Sec) (archaeal/eukaryal route): step 2/2. Converts O-phosphoseryl-tRNA(Sec) to selenocysteinyl-tRNA(Sec) required for selenoprotein biosynthesis. The chain is O-phosphoseryl-tRNA(Sec) selenium transferase (spcS) from Methanococcus maripaludis (strain DSM 14266 / JCM 13030 / NBRC 101832 / S2 / LL).